Consider the following 211-residue polypeptide: Mitotic spindle assembly checkpoint protein MAD2B (211 aa).

The HORMA domain occupies 13–203 (QVVADVLCEF…SDILKMQLYV (191 aa)). Residues 21–155 (EFLEVAVHLI…FTVLVHTREA (135 aa)) form a mediates interaction with REV1 and REV3L and homodimerization region.

In terms of assembly, homooligomer. Heterodimer with REV3L. This dimer forms the minimal DNA polymerase zeta complex (Pol-zeta2), with REV3L bearing DNA polymerase catalytic activity, although its activity is very low in this context. Component of the tetrameric Pol-zeta complex (Pol-zeta4), which consists of REV3L, MAD2L2, POLD2 and POLD3; Pol-zeta4 is the fully active form of DNA polymerase zeta. Component of the shieldin complex, consisting of SHLD1, SHLD2, SHLD3 and MAD2L2/REV7. Within the complex, SHLD2 forms a scaffold which interacts with a SHLD3-MAD2L2 subcomplex via its N-terminus, and with SHLD1 via its C-terminus. Interacts with REV1. Interacts with ADAM9. Interacts with CHAMP1. Interacts with FZR1 (in complex with the anaphase promoting complex APC). May interact with CDC20. Interacts with RAN. Interacts with ELK1; the interaction is direct and recruits MAD2L2 to ELK1-specific promoters. May interact with the JNK kinases MAPK8 and/or MAPK9 to stimulate ELK1 phosphorylation and transcriptional activity upon DNA damage. Interacts with TCF7L2; prevents its binding to promoters and negatively modulates its transcriptional activity. Interacts with YY1AP1. Interacts with PRCC; the interaction is direct. Interacts with POGZ. Interacts with ASTE1.

The protein localises to the nucleus. Its subcellular location is the cytoplasm. The protein resides in the cytoskeleton. It localises to the spindle. In terms of biological role, adapter protein able to interact with different proteins and involved in different biological processes. Mediates the interaction between the error-prone DNA polymerase zeta catalytic subunit REV3L and the inserter polymerase REV1, thereby mediating the second polymerase switching in translesion DNA synthesis. Translesion DNA synthesis releases the replication blockade of replicative polymerases, stalled in presence of DNA lesions. Component of the shieldin complex, which plays an important role in repair of DNA double-stranded breaks (DSBs). During G1 and S phase of the cell cycle, the complex functions downstream of TP53BP1 to promote non-homologous end joining (NHEJ) and suppress DNA end resection. Mediates various NHEJ-dependent processes including immunoglobulin class-switch recombination, and fusion of unprotected telomeres. May also regulate another aspect of cellular response to DNA damage through regulation of the JNK-mediated phosphorylation and activation of the transcriptional activator ELK1. Inhibits the FZR1- and probably CDC20-mediated activation of the anaphase promoting complex APC thereby regulating progression through the cell cycle. Regulates TCF7L2-mediated gene transcription and may play a role in epithelial-mesenchymal transdifferentiation. The chain is Mitotic spindle assembly checkpoint protein MAD2B (MAD2L2) from Bos taurus (Bovine).